A 218-amino-acid polypeptide reads, in one-letter code: DNA-directed RNA polymerase III subunit RPC7-like (218 aa).

A disordered region spans residues 133–218 (LPKRPPKTTE…SDDNMDEAIY (86 aa)). Residues 139–160 (KTTEDKEETIQKLETLEKKEEE) show a composition bias toward basic and acidic residues. 2 stretches are compositionally biased toward acidic residues: residues 161-193 (VTSE…EETD) and 201-218 (NGED…EAIY).

This sequence belongs to the eukaryotic RPC7 RNA polymerase subunit family. In terms of assembly, component of the RNA polymerase III (Pol III) complex consisting of 17 subunits. Pol III exists as two alternative complexes defined by the mutually exclusive incorporation of subunit POLR3G/RPC7alpha or POLR3GL/RPC7beta. Found in a trimeric complex with POLR3C/RPC3 and POLR3F/RPC6. Directly interacts with POLR3C. Widely expressed. Expressed in CD4-positive T cells.

It localises to the nucleus. Its function is as follows. DNA-dependent RNA polymerase catalyzes the transcription of DNA into RNA using the four ribonucleoside triphosphates as substrates. Specific peripheric component of RNA polymerase III which synthesizes small RNAs, such as 5S rRNA and tRNAs. The sequence is that of DNA-directed RNA polymerase III subunit RPC7-like from Homo sapiens (Human).